A 126-amino-acid chain; its full sequence is Fluoride-specific ion channel FluC (126 aa).

Transmembrane regions (helical) follow at residues 33-53 (LPLN…VFIV), 64-84 (YSLF…SFAL), and 96-116 (GALA…LIGG). Na(+) contacts are provided by Gly-74 and Thr-77.

Belongs to the fluoride channel Fluc/FEX (TC 1.A.43) family.

Its subcellular location is the cell membrane. The enzyme catalyses fluoride(in) = fluoride(out). With respect to regulation, na(+) is not transported, but it plays an essential structural role and its presence is essential for fluoride channel function. Functionally, fluoride-specific ion channel. Important for reducing fluoride concentration in the cell, thus reducing its toxicity. The polypeptide is Fluoride-specific ion channel FluC (Nitrosopumilus maritimus (strain SCM1)).